A 112-amino-acid chain; its full sequence is Large ribosomal subunit protein eL31 (112 aa).

It belongs to the eukaryotic ribosomal protein eL31 family. As to quaternary structure, component of the large ribosomal subunit. Mature ribosomes consist of a small (40S) and a large (60S) subunit. The 40S subunit contains about 32 different proteins and 1 molecule of RNA (18S). The 60S subunit contains 45 different proteins and 3 molecules of RNA (25S, 5.8S and 5S).

The protein resides in the cytoplasm. In terms of biological role, component of the ribosome, a large ribonucleoprotein complex responsible for the synthesis of proteins in the cell. The small ribosomal subunit (SSU) binds messenger RNAs (mRNAs) and translates the encoded message by selecting cognate aminoacyl-transfer RNA (tRNA) molecules. The large subunit (LSU) contains the ribosomal catalytic site termed the peptidyl transferase center (PTC), which catalyzes the formation of peptide bonds, thereby polymerizing the amino acids delivered by tRNAs into a polypeptide chain. The nascent polypeptides leave the ribosome through a tunnel in the LSU and interact with protein factors that function in enzymatic processing, targeting, and the membrane insertion of nascent chains at the exit of the ribosomal tunnel. This is Large ribosomal subunit protein eL31 from Candida albicans (strain SC5314 / ATCC MYA-2876) (Yeast).